We begin with the raw amino-acid sequence, 333 residues long: Protoheme IX farnesyltransferase (333 aa).

Transmembrane regions (helical) follow at residues 63 to 83 (LACT…LNCI), 109 to 129 (AAFI…VSGV), 132 to 152 (LAAG…TAIL), 160 to 180 (IVIG…AASG), 188 to 208 (WLFA…ALLL), 245 to 265 (GFGV…LIPF), and 292 to 312 (WSIF…LPMA).

Belongs to the UbiA prenyltransferase family. Protoheme IX farnesyltransferase subfamily.

It is found in the cell inner membrane. It carries out the reaction heme b + (2E,6E)-farnesyl diphosphate + H2O = Fe(II)-heme o + diphosphate. It participates in porphyrin-containing compound metabolism; heme O biosynthesis; heme O from protoheme: step 1/1. Its function is as follows. Converts heme B (protoheme IX) to heme O by substitution of the vinyl group on carbon 2 of heme B porphyrin ring with a hydroxyethyl farnesyl side group. This chain is Protoheme IX farnesyltransferase, found in Prochlorococcus marinus (strain MIT 9303).